A 345-amino-acid chain; its full sequence is Meiotic recombination protein rec12 (345 aa).

Residues 5–137 (DKKKVVRSWI…LNVEASAKGL (133 aa)) form the Topo IIA-type catalytic domain. The active-site O-(5'-phospho-DNA)-tyrosine intermediate is Tyr-98. Glu-179 and Asp-229 together coordinate Mg(2+).

Belongs to the TOP6A family. In terms of assembly, component of the DSB catalytic core (DSBC) complex, composed of at least rec12, rec6 and rec14. The complex interacts with mde2. Mg(2+) is required as a cofactor.

The protein localises to the cytoplasm. It is found in the nucleus. It carries out the reaction ATP-dependent breakage, passage and rejoining of double-stranded DNA.. In terms of biological role, required for formation of the double-strand breaks (DSBs) that initiate meiotic recombination. Required for crossover recombination and chiasmatic segregation of chromosomes during meiosis I. Also involved in the faithful equational segregation of chromosomes during meiosis II. This chain is Meiotic recombination protein rec12, found in Schizosaccharomyces pombe (strain 972 / ATCC 24843) (Fission yeast).